A 177-amino-acid polypeptide reads, in one-letter code: Large ribosomal subunit protein uL6 (177 aa).

The protein belongs to the universal ribosomal protein uL6 family. In terms of assembly, part of the 50S ribosomal subunit.

This protein binds to the 23S rRNA, and is important in its secondary structure. It is located near the subunit interface in the base of the L7/L12 stalk, and near the tRNA binding site of the peptidyltransferase center. In Leptothrix cholodnii (strain ATCC 51168 / LMG 8142 / SP-6) (Leptothrix discophora (strain SP-6)), this protein is Large ribosomal subunit protein uL6.